The chain runs to 381 residues: 40-kDa huntingtin-associated protein (381 aa).

At Ala2 the chain carries N-acetylalanine. The Nuclear localization signal signature appears at 34–36 (KKR). Positions 213 to 260 (EHGGHPVQQPELPQQLPSVPQPSLPGPQPRPVLGSTLPLPLPPDHAPG) are disordered. The span at 218 to 230 (PVQQPELPQQLPS) shows a compositional bias: low complexity. Residues 231-242 (VPQPSLPGPQPR) show a composition bias toward pro residues.

Interacts with HTT (via C-terminus). Interacts with RAB5A. Found in a complex with F8A1/F8A2/F8A3, HTT and RAB5A; mediates the recruitment of HTT by RAB5A onto early endosomes.

It is found in the cytoplasm. It localises to the nucleus. The protein localises to the early endosome. Its subcellular location is the nuclear body. RAB5A effector molecule that is involved in vesicular trafficking of early endosomes. Mediates the recruitment of HTT by RAB5A onto early endosomes. The HTT-F8A1/F8A2/F8A3-RAB5A complex stimulates early endosomal interaction with actin filaments and inhibits interaction with microtubules, leading to the reduction of endosome motility. In Rattus norvegicus (Rat), this protein is 40-kDa huntingtin-associated protein (F8a1).